Consider the following 197-residue polypeptide: Imidazoleglycerol-phosphate dehydratase (197 aa).

The protein belongs to the imidazoleglycerol-phosphate dehydratase family.

It is found in the cytoplasm. The enzyme catalyses D-erythro-1-(imidazol-4-yl)glycerol 3-phosphate = 3-(imidazol-4-yl)-2-oxopropyl phosphate + H2O. It participates in amino-acid biosynthesis; L-histidine biosynthesis; L-histidine from 5-phospho-alpha-D-ribose 1-diphosphate: step 6/9. This is Imidazoleglycerol-phosphate dehydratase from Chromohalobacter salexigens (strain ATCC BAA-138 / DSM 3043 / CIP 106854 / NCIMB 13768 / 1H11).